The following is an 845-amino-acid chain: Complement component C7 (845 aa).

Positions 1-22 (MQVTSLLILVCFIAAFQVFSRA) are cleaved as a signal peptide. In terms of domain architecture, TSP type-1 1 spans 27-80 (NCKWDSYGPWSECNGCTKTQTRRRSVAVYGQYGGYPCEGSAFETQSCKPERGCP). Intrachain disulfides connect Cys-28–Cys-63, Cys-39–Cys-73, Cys-42–Cys-79, Cys-85–Cys-96, Cys-91–Cys-109, and Cys-103–Cys-119. Residues 84–120 (GCGDRFRCFSGQCISKSLVCNGDPDCEEDGADEDKCE) form the LDL-receptor class A domain. The 335-residue stretch at 122-456 (VANPSCNIDK…EYFDEFDPCH (335 aa)) folds into the MACPF domain. The N-linked (GlcNAc...) asparagine glycan is linked to Asn-124. Cys-127 and Cys-164 are disulfide-bonded. An N-linked (GlcNAc...) asparagine glycan is attached at Asn-201. 21 disulfide bridges follow: Cys-336/Cys-353, Cys-433/Cys-560, Cys-455/Cys-505, Cys-457/Cys-473, Cys-460/Cys-475, Cys-477/Cys-486, Cys-512/Cys-545, Cys-523/Cys-535, Cys-571/Cys-613, Cys-599/Cys-626, Cys-631/Cys-673, Cys-659/Cys-688, Cys-703/Cys-714, Cys-716/Cys-751, Cys-722/Cys-744, Cys-729/Cys-764, Cys-774/Cys-783, Cys-777/Cys-790, Cys-792/Cys-826, Cys-798/Cys-819, and Cys-806/Cys-839. One can recognise an EGF-like domain in the interval 457–487 (CRPCQNGGLAIVVETQCQCLCKPYTFGSACE). In terms of domain architecture, TSP type-1 2 spans 500-549 (DGGWNCWSSWSPCVQGKRTRSRECNNPPPRDDGKSCLGETTESKQCEDQD). CCP stretches follow at residues 545 to 615 (CEDQ…RCGE) and 616 to 693 (DLQW…QKAT). 2 Sushi domains span residues 569–628 (EFCL…HCQK) and 629–690 (LACV…KCVQ). Factor I module (FIM) regions lie at residues 695–771 (TPPP…SPAE) and 772–844 (KVCG…EEAA). N-linked (GlcNAc...) asparagine glycosylation is present at Asn-755.

This sequence belongs to the complement C6/C7/C8/C9 family. Monomer or dimer; as a C5b-7 complex it can also form multimeric rosettes. Component of the membrane attack complex (MAC), composed of complement C5b, C6, C7, C8A, C8B, C8G and multiple copies of the pore-forming subunit C9. Post-translationally, C-, N- and O-glycosylated. O-glycosylated with core 1 or possibly core 8 glycans.

It is found in the secreted. The protein resides in the target cell membrane. Membrane attack complex (MAC) assembly is inhibited by CD59, thereby protecting self-cells from damage during complement activation. MAC assembly is also inhibited by clusterin (CLU) chaperones that inhibit polymerization of C9. Functionally, component of the membrane attack complex (MAC), a multiprotein complex activated by the complement cascade, which inserts into a target cell membrane and forms a pore, leading to target cell membrane rupture and cell lysis. The MAC is initiated by proteolytic cleavage of C5 into complement C5b in response to the classical, alternative, lectin and GZMK complement pathways. The complement pathways consist in a cascade of proteins that leads to phagocytosis and breakdown of pathogens and signaling that strengthens the adaptive immune system. C7 serves as a membrane anchor. During MAC assembly, associates with C5b and C6 to form the C5b-7 complex, a key lipophilic precursor of the MAC complex, which associates with the outer leaflet and reduces the energy for membrane bending. The sequence is that of Complement component C7 from Mus musculus (Mouse).